The primary structure comprises 307 residues: Methionyl-tRNA formyltransferase (307 aa).

108 to 111 (SLLP) provides a ligand contact to (6S)-5,6,7,8-tetrahydrofolate.

Belongs to the Fmt family.

It carries out the reaction L-methionyl-tRNA(fMet) + (6R)-10-formyltetrahydrofolate = N-formyl-L-methionyl-tRNA(fMet) + (6S)-5,6,7,8-tetrahydrofolate + H(+). Attaches a formyl group to the free amino group of methionyl-tRNA(fMet). The formyl group appears to play a dual role in the initiator identity of N-formylmethionyl-tRNA by promoting its recognition by IF2 and preventing the misappropriation of this tRNA by the elongation apparatus. The chain is Methionyl-tRNA formyltransferase from Xanthomonas oryzae pv. oryzae (strain MAFF 311018).